The following is a 403-amino-acid chain: Formate-dependent phosphoribosylglycinamide formyltransferase (403 aa).

N(1)-(5-phospho-beta-D-ribosyl)glycinamide contacts are provided by residues 27 to 28 and Glu-87; that span reads EL. ATP contacts are provided by residues Arg-120, Lys-161, 166–171, 201–204, and Glu-209; these read SSGKGQ and EGFV. Residues 125–319 form the ATP-grasp domain; sequence RLAAEELGLP…EFELHARAIL (195 aa). Residues Glu-278 and Glu-290 each contribute to the Mg(2+) site. N(1)-(5-phospho-beta-D-ribosyl)glycinamide-binding positions include Asp-297, Lys-366, and 373–374; that span reads RR. The interval 382-403 is disordered; sequence GPDVETARSRAREAASRVEPVA. Over residues 386–397 the composition is skewed to basic and acidic residues; the sequence is ETARSRAREAAS.

The protein belongs to the PurK/PurT family. Homodimer.

It catalyses the reaction N(1)-(5-phospho-beta-D-ribosyl)glycinamide + formate + ATP = N(2)-formyl-N(1)-(5-phospho-beta-D-ribosyl)glycinamide + ADP + phosphate + H(+). It participates in purine metabolism; IMP biosynthesis via de novo pathway; N(2)-formyl-N(1)-(5-phospho-D-ribosyl)glycinamide from N(1)-(5-phospho-D-ribosyl)glycinamide (formate route): step 1/1. In terms of biological role, involved in the de novo purine biosynthesis. Catalyzes the transfer of formate to 5-phospho-ribosyl-glycinamide (GAR), producing 5-phospho-ribosyl-N-formylglycinamide (FGAR). Formate is provided by PurU via hydrolysis of 10-formyl-tetrahydrofolate. The protein is Formate-dependent phosphoribosylglycinamide formyltransferase of Rhodococcus jostii (strain RHA1).